The chain runs to 211 residues: Shikimate kinase (211 aa).

The interval 1–23 (MNASANLCAASDNDPQPGDQEAA) is disordered. 50–55 (GAGKTT) lines the ATP pocket. Residue threonine 54 participates in Mg(2+) binding. The substrate site is built by aspartate 72, arginine 96, and glycine 118. Residue arginine 156 coordinates ATP. Arginine 175 provides a ligand contact to substrate.

It belongs to the shikimate kinase family. Monomer. Mg(2+) serves as cofactor.

The protein localises to the cytoplasm. It carries out the reaction shikimate + ATP = 3-phosphoshikimate + ADP + H(+). The protein operates within metabolic intermediate biosynthesis; chorismate biosynthesis; chorismate from D-erythrose 4-phosphate and phosphoenolpyruvate: step 5/7. In terms of biological role, catalyzes the specific phosphorylation of the 3-hydroxyl group of shikimic acid using ATP as a cosubstrate. The protein is Shikimate kinase of Bordetella bronchiseptica (strain ATCC BAA-588 / NCTC 13252 / RB50) (Alcaligenes bronchisepticus).